An 88-amino-acid polypeptide reads, in one-letter code: Small ribosomal subunit protein bS20 (88 aa).

A compositionally biased stretch (basic residues) spans 1 to 22; it reads MANIKSSKKRSIQSEKKRKYNS. The segment at 1–26 is disordered; it reads MANIKSSKKRSIQSEKKRKYNSSKKS.

This sequence belongs to the bacterial ribosomal protein bS20 family.

Its function is as follows. Binds directly to 16S ribosomal RNA. The sequence is that of Small ribosomal subunit protein bS20 from Wigglesworthia glossinidia brevipalpis.